The following is a 99-amino-acid chain: Evasin P1162 (99 aa).

Positions 1 to 28 (MEVKTFAFLQIAVCIAIGIELICAGTNA) are cleaved as a signal peptide. Cystine bridges form between Cys-40/Cys-59, Cys-44/Cys-61, and Cys-55/Cys-72. 4 N-linked (GlcNAc...) asparagine glycosylation sites follow: Asn-43, Asn-49, Asn-58, and Asn-85.

It localises to the secreted. In terms of biological role, salivary chemokine-binding protein which binds to host chemokines CXCL1, CXCL2, CXCL3, CXCL5 and CXCL8. This chain is Evasin P1162, found in Ixodes ricinus (Common tick).